Reading from the N-terminus, the 68-residue chain is Large ribosomal subunit protein bL31 (68 aa).

Cysteine 17, cysteine 19, cysteine 37, and cysteine 40 together coordinate Zn(2+).

The protein belongs to the bacterial ribosomal protein bL31 family. Type A subfamily. Part of the 50S ribosomal subunit. It depends on Zn(2+) as a cofactor.

Functionally, binds the 23S rRNA. The polypeptide is Large ribosomal subunit protein bL31 (Dehalococcoides mccartyi (strain ATCC BAA-2266 / KCTC 15142 / 195) (Dehalococcoides ethenogenes (strain 195))).